The sequence spans 665 residues: PR5-like receptor kinase (665 aa).

An N-terminal signal peptide occupies residues Met-1 to Ser-24. The Extracellular portion of the chain corresponds to Arg-25–Lys-276. 2 N-linked (GlcNAc...) asparagine glycosylation sites follow: Asn-26 and Asn-88. Cystine bridges form between Cys-33/Cys-249, Cys-81/Cys-91, Cys-96/Cys-103, Cys-153/Cys-238, Cys-158/Cys-221, Cys-166/Cys-184, Cys-188/Cys-197, and Cys-198/Cys-208. An N-linked (GlcNAc...) asparagine glycan is attached at Asn-163. The N-linked (GlcNAc...) asparagine glycan is linked to Asn-233. A helical membrane pass occupies residues Leu-277–Val-297. Residues Arg-298–Ser-665 lie on the Cytoplasmic side of the membrane. The region spanning Asn-331–Leu-620 is the Protein kinase domain. ATP contacts are provided by residues Leu-337–Val-345 and Lys-360. Residue Asp-455 is the Proton acceptor of the active site.

In the N-terminal section; belongs to the thaumatin family. The protein in the C-terminal section; belongs to the protein kinase superfamily. Ser/Thr protein kinase family. In terms of processing, autophosphorylated in vitro. Expressed in roots. Expressed at low levels in stems.

It localises to the membrane. It catalyses the reaction L-seryl-[protein] + ATP = O-phospho-L-seryl-[protein] + ADP + H(+). It carries out the reaction L-threonyl-[protein] + ATP = O-phospho-L-threonyl-[protein] + ADP + H(+). Functionally, possesses kinase activity in vitro. The chain is PR5-like receptor kinase from Arabidopsis thaliana (Mouse-ear cress).